The following is a 406-amino-acid chain: Argininosuccinate synthase (406 aa).

ATP is bound by residues 10–18 (AYSGGLDTS) and Ala37. L-citrulline is bound by residues Tyr88 and Ser93. Gly118 provides a ligand contact to ATP. L-aspartate is bound by residues Thr120, Asn124, and Asp125. Asn124 lines the L-citrulline pocket. Positions 128, 179, 188, 264, and 276 each coordinate L-citrulline.

Belongs to the argininosuccinate synthase family. Type 1 subfamily. As to quaternary structure, homotetramer.

Its subcellular location is the cytoplasm. The enzyme catalyses L-citrulline + L-aspartate + ATP = 2-(N(omega)-L-arginino)succinate + AMP + diphosphate + H(+). It participates in amino-acid biosynthesis; L-arginine biosynthesis; L-arginine from L-ornithine and carbamoyl phosphate: step 2/3. The protein is Argininosuccinate synthase of Azotobacter vinelandii (strain DJ / ATCC BAA-1303).